The sequence spans 417 residues: Glutamate-1-semialdehyde 2,1-aminomutase (417 aa).

At lysine 263 the chain carries N6-(pyridoxal phosphate)lysine.

It belongs to the class-III pyridoxal-phosphate-dependent aminotransferase family. HemL subfamily. Pyridoxal 5'-phosphate is required as a cofactor.

The protein resides in the cytoplasm. The catalysed reaction is (S)-4-amino-5-oxopentanoate = 5-aminolevulinate. Its pathway is porphyrin-containing compound metabolism; protoporphyrin-IX biosynthesis; 5-aminolevulinate from L-glutamyl-tRNA(Glu): step 2/2. The chain is Glutamate-1-semialdehyde 2,1-aminomutase from Methanospirillum hungatei JF-1 (strain ATCC 27890 / DSM 864 / NBRC 100397 / JF-1).